We begin with the raw amino-acid sequence, 728 residues long: Catalase B (728 aa).

Positions 1 to 15 (MRLTFIPSLIGVANA) are cleaved as a signal peptide. The propeptide occupies 16 to 27 (VCPYMTGELNRR). Histidine 102 is a catalytic residue. An N-linked (GlcNAc...) asparagine glycan is attached at asparagine 120. Asparagine 175 is a catalytic residue. Position 389 (tyrosine 389) interacts with heme. Asparagine 448 and asparagine 551 each carry an N-linked (GlcNAc...) asparagine glycan.

The protein belongs to the catalase family. As to quaternary structure, homotetramer. Requires heme as cofactor. N-glycosylated.

Its subcellular location is the secreted. The enzyme catalyses 2 H2O2 = O2 + 2 H2O. Its function is as follows. Occurs in almost all aerobically respiring organisms and serves to protect cells from the toxic effects of hydrogen peroxide. In Aspergillus fumigatus (strain ATCC MYA-4609 / CBS 101355 / FGSC A1100 / Af293) (Neosartorya fumigata), this protein is Catalase B (catB).